The primary structure comprises 101 residues: MGKHILLLPLGLSLLMSSLLALQCFRCTSFDSTGFCHVGRQKCQTYPDEICAWVVVTTRDGKFVYGNQSCAECNATTVEHGSLIVSTNCCSATPFCNMVHR.

Positions 1 to 21 are cleaved as a signal peptide; it reads MGKHILLLPLGLSLLMSSLLA. Positions 22-99 constitute a UPAR/Ly6 domain; it reads LQCFRCTSFD…CSATPFCNMV (78 aa). Disulfide bonds link C24–C51, C27–C36, C43–C70, C73–C89, and C90–C96. N67 and N74 each carry an N-linked (GlcNAc...) asparagine glycan.

N-glycosylated.

The protein localises to the secreted. This Rattus norvegicus (Rat) protein is Urinary protein 2.